The sequence spans 129 residues: MGDFLFPIDSGAALAIHVALSAGIVAAIIGVAAVLREKRAGARPDTPYEGGVLPAAPPQGPQNAPYFLIAALFVIFDMEAAILFAWAVAAREAGWVGLIEAAIFIGVLLLALVYLWIDGALDWGPGERK.

The next 3 membrane-spanning stretches (helical) occupy residues L14–V34, F67–A87, and G97–I117.

It belongs to the complex I subunit 3 family. NDH-1 is composed of 14 different subunits. Subunits NuoA, H, J, K, L, M, N constitute the membrane sector of the complex.

It is found in the cell inner membrane. It catalyses the reaction a quinone + NADH + 5 H(+)(in) = a quinol + NAD(+) + 4 H(+)(out). Its function is as follows. NDH-1 shuttles electrons from NADH, via FMN and iron-sulfur (Fe-S) centers, to quinones in the respiratory chain. The immediate electron acceptor for the enzyme in this species is believed to be ubiquinone. Couples the redox reaction to proton translocation (for every two electrons transferred, four hydrogen ions are translocated across the cytoplasmic membrane), and thus conserves the redox energy in a proton gradient. The sequence is that of NADH-quinone oxidoreductase subunit A from Rhodopseudomonas palustris (strain BisB18).